We begin with the raw amino-acid sequence, 422 residues long: UDP-N-acetylglucosamine 1-carboxyvinyltransferase (422 aa).

22–23 contacts phosphoenolpyruvate; the sequence is KN. UDP-N-acetyl-alpha-D-glucosamine is bound at residue R93. C117 serves as the catalytic Proton donor. C117 carries the 2-(S-cysteinyl)pyruvic acid O-phosphothioketal modification. UDP-N-acetyl-alpha-D-glucosamine contacts are provided by residues 122 to 126, D309, and I331; that span reads RPVDQ.

This sequence belongs to the EPSP synthase family. MurA subfamily.

It localises to the cytoplasm. It catalyses the reaction phosphoenolpyruvate + UDP-N-acetyl-alpha-D-glucosamine = UDP-N-acetyl-3-O-(1-carboxyvinyl)-alpha-D-glucosamine + phosphate. The protein operates within cell wall biogenesis; peptidoglycan biosynthesis. In terms of biological role, cell wall formation. Adds enolpyruvyl to UDP-N-acetylglucosamine. This Delftia acidovorans (strain DSM 14801 / SPH-1) protein is UDP-N-acetylglucosamine 1-carboxyvinyltransferase.